Here is a 425-residue protein sequence, read N- to C-terminus: MAPEPEDIKDEKNPRPLDEDDIALLKTYGLGPYSTHIKKAEKEVKDLAKKVNDLCGIKESDTGLAAPSQWDLVSDKQMMQEEQPLQVARCTKIINPNSEDAKYVINVKQIAKFVVGLGDKVSPTDIEEGMRVGVDRNKYQIQIPLPPKIDPSVTMMTVEEKPDVTYNDVGGCKEQIEKMREVVELPMLHPEKFVKLGIDPPKGVLCYGPPGTGKTLLARAVANRTDACFIRVIGSELVQKYVGEGARMVRELFQMARSKKACIVFFDEVDAIGGARFDDGVGGDNEVQRTMLEIVNQLDGFDARGNIKVLMATNRPDTLDPALLRPGRLDRKVEFGLPDLESRTQIFKIHTRTMNCERDIRFELLARLCPNSTGADIRSVCTEAGMYAIRARRKTVTEKDFLDAVNKVIKGYQKFSATPKYMVYN.

208 to 215 serves as a coordination point for ATP; that stretch reads GPPGTGKT.

Belongs to the AAA ATPase family.

It localises to the cytoplasm. Its subcellular location is the nucleus. In terms of biological role, the 26S proteasome is involved in the ATP-dependent degradation of ubiquitinated proteins. The regulatory (or ATPase) complex confers ATP dependency and substrate specificity to the 26S complex. This Prunus persica (Peach) protein is 26S proteasome regulatory subunit 7 (RPT1).